The primary structure comprises 469 residues: Argininosuccinate lyase (469 aa).

It belongs to the lyase 1 family. Argininosuccinate lyase subfamily.

It is found in the cytoplasm. The catalysed reaction is 2-(N(omega)-L-arginino)succinate = fumarate + L-arginine. Its pathway is amino-acid biosynthesis; L-arginine biosynthesis; L-arginine from L-ornithine and carbamoyl phosphate: step 3/3. This Polaromonas naphthalenivorans (strain CJ2) protein is Argininosuccinate lyase.